Consider the following 200-residue polypeptide: Large ribosomal subunit protein uL4c (200 aa).

Positions 45–71 (RAEIRGGGRKPWKQKGTGRARAGSRRS) are disordered. A compositionally biased stretch (basic residues) spans 51–68 (GGRKPWKQKGTGRARAGS).

This sequence belongs to the universal ribosomal protein uL4 family. As to quaternary structure, part of the 50S ribosomal subunit.

Its subcellular location is the plastid. It localises to the chloroplast. In terms of biological role, probably binds the 23S rRNA. This Cyanidioschyzon merolae (strain NIES-3377 / 10D) (Unicellular red alga) protein is Large ribosomal subunit protein uL4c (rpl4).